Here is a 233-residue protein sequence, read N- to C-terminus: NADP-dependent glyceraldehyde-3-phosphate dehydrogenase (233 aa).

Asn-7–Tyr-8 lines the substrate pocket. NADP(+) is bound by residues Lys-30 and Ser-33. Gly-83–Gly-87 is an NAD(+) binding site. Glu-102 acts as the Proton acceptor in catalysis. Arg-135–Thr-137 is a binding site for substrate. Catalysis depends on Cys-136, which acts as the Nucleophile. Residues Glu-180 and Glu-229 each contribute to the NADP(+) site.

Belongs to the aldehyde dehydrogenase family.

It is found in the cytoplasm. The enzyme catalyses D-glyceraldehyde 3-phosphate + NADP(+) + H2O = (2R)-3-phosphoglycerate + NADPH + 2 H(+). Its function is as follows. Important as a means of generating NADPH for biosynthetic reactions. The chain is NADP-dependent glyceraldehyde-3-phosphate dehydrogenase (GapN) from Scenedesmus vacuolatus (Green alga).